A 193-amino-acid polypeptide reads, in one-letter code: uncharacterized protein (193 aa).

Residues 1–26 (MRNVFVGALCMCGMSFVFSDSVRSAA) form the signal peptide.

This is an uncharacterized protein from Treponema pallidum (strain Nichols).